Here is a 274-residue protein sequence, read N- to C-terminus: tRNA pseudouridine synthase A (274 aa).

Asp51 functions as the Nucleophile in the catalytic mechanism. Residue Tyr109 participates in substrate binding.

This sequence belongs to the tRNA pseudouridine synthase TruA family. In terms of assembly, homodimer.

The enzyme catalyses uridine(38/39/40) in tRNA = pseudouridine(38/39/40) in tRNA. Its function is as follows. Formation of pseudouridine at positions 38, 39 and 40 in the anticodon stem and loop of transfer RNAs. The sequence is that of tRNA pseudouridine synthase A from Acidovorax sp. (strain JS42).